The chain runs to 166 residues: Calmodulin-like protein 5 (166 aa).

4 EF-hand domains span residues 11–46 (EQVA…LGQT), 47–82 (PTRE…KASR), 96–131 (AADE…LGEK), and 132–166 (LTDE…LSDQ). The Ca(2+) site is built by aspartate 24, aspartate 26, aspartate 28, cysteine 30, glutamate 35, aspartate 60, aspartate 62, asparagine 64, threonine 66, glutamate 71, aspartate 109, aspartate 111, aspartate 113, and glutamate 120. The residue at position 131 (lysine 131) is an N6,N6,N6-trimethyllysine. 5 residues coordinate Ca(2+): aspartate 145, aspartate 147, aspartate 149, glutamine 151, and glutamate 156.

It belongs to the calmodulin family.

In terms of biological role, potential calcium sensor. This is Calmodulin-like protein 5 (CML5) from Oryza sativa subsp. japonica (Rice).